The primary structure comprises 146 residues: MTLKLHDLRPARGSKTARTRVGRGDGSKGKTAGRGTKGTRARKQVPVTFEGGQMPIHMRLPKLKGFRNRFRTEYEIVNVGDINRLFPQGGAVGVDDLVAKGAVRKNALVKVLGDGKLTAKVDVSAHKFSGSARAKITAAGGSATEL.

Over residues 1 to 10 (MTLKLHDLRP) the composition is skewed to basic and acidic residues. The segment at 1–41 (MTLKLHDLRPARGSKTARTRVGRGDGSKGKTAGRGTKGTRA) is disordered.

Belongs to the universal ribosomal protein uL15 family. In terms of assembly, part of the 50S ribosomal subunit.

Binds to the 23S rRNA. This is Large ribosomal subunit protein uL15 from Mycobacterium bovis (strain BCG / Pasteur 1173P2).